The sequence spans 129 residues: Small ribosomal subunit protein uS11 (129 aa).

Belongs to the universal ribosomal protein uS11 family. As to quaternary structure, part of the 30S ribosomal subunit. Interacts with proteins S7 and S18. Binds to IF-3.

Functionally, located on the platform of the 30S subunit, it bridges several disparate RNA helices of the 16S rRNA. Forms part of the Shine-Dalgarno cleft in the 70S ribosome. This chain is Small ribosomal subunit protein uS11, found in Pelotomaculum thermopropionicum (strain DSM 13744 / JCM 10971 / SI).